A 327-amino-acid polypeptide reads, in one-letter code: Cobalamin biosynthesis protein CobD (327 aa).

A run of 4 helical transmembrane segments spans residues 60–80 (GMWL…VLEL), 82–102 (LPFA…VLLA), 159–179 (DGIV…LFAY), and 304–324 (LFWS…LIGL).

It belongs to the CobD/CbiB family.

The protein resides in the cell membrane. It participates in cofactor biosynthesis; adenosylcobalamin biosynthesis. Functionally, converts cobyric acid to cobinamide by the addition of aminopropanol on the F carboxylic group. This Brucella anthropi (strain ATCC 49188 / DSM 6882 / CCUG 24695 / JCM 21032 / LMG 3331 / NBRC 15819 / NCTC 12168 / Alc 37) (Ochrobactrum anthropi) protein is Cobalamin biosynthesis protein CobD.